The following is a 579-amino-acid chain: uncharacterized protein (579 aa).

Belongs to the UbiD family.

This is an uncharacterized protein from Chlamydia muridarum (strain MoPn / Nigg).